The chain runs to 319 residues: MFKKWSGLFVIAACFLLVAACGNSSTKGSADSKGDKLHVVTTFYPMYEFTKQIVKDKGDVDLLIPSSVEPHDWEPTPKDIANIQDADLFVYNSEYMETWVPSAEKSMGQGHAVFVNASKGIDLMEGSEEEHEEHDHGEHEHSHAMDPHVWLSPVLAQKEVKNITAQIVKQDPDNKEYYEKNSKEYIAKLQDLDKLYRTTAKKAEKKEFITQHTAFGYLAKEYGLKQVPIAGLSPDQEPSAASLAKLKTYAKEHNVKVIYFEEIASSKVADTLASEIGAKTEVLNTLEGLSKEEQDKGLGYIDIMKQNLDALKDSLLVKS.

Positions 1 to 20 are cleaved as a signal peptide; sequence MFKKWSGLFVIAACFLLVAA. Cysteine 21 carries the N-palmitoyl cysteine lipid modification. Cysteine 21 carries the S-diacylglycerol cysteine lipid modification. Zn(2+) contacts are provided by histidine 71, histidine 148, histidine 212, and glutamate 287.

Belongs to the bacterial solute-binding protein 9 family. As to quaternary structure, the complex is composed of two ATP-binding proteins (ZnuC), two transmembrane proteins (ZnuB) and a solute-binding protein (ZnuA).

It localises to the cell membrane. Its subcellular location is the membrane raft. Part of the ATP-binding cassette (ABC) transport system ZnuABC involved in zinc import. Binds zinc with high affinity and specificity and delivers it to the membrane permease for translocation into the cytoplasm. ZnuABC-mediated zinc transport is required for comF expression and competence development. The sequence is that of High-affinity zinc uptake system protein ZnuA (znuA) from Bacillus subtilis (strain 168).